Consider the following 425-residue polypeptide: Synaptotagmin-4 (425 aa).

At 1–16 (MAPITTSREEFDEIPT) the chain is on the vesicular side. Residues 17–37 (VVGIFSAFGLVFTVSLFAWIC) form a helical membrane-spanning segment. At 38–425 (CQRKSSKSNK…IAKWHVLCDG (388 aa)) the chain is on the cytoplasmic side. Over residues 73–83 (FGADDKNEVKN) the composition is skewed to basic and acidic residues. 2 disordered regions span residues 73-93 (FGADDKNEVKNKPAVPKNSLH) and 127-147 (LEGEKESVSPESLKSSTSLTS). The residue at position 135 (serine 135) is a Phosphoserine; by MAPK8. The segment covering 135-146 (SPESLKSSTSLT) has biased composition (low complexity). 2 C2 domains span residues 153–274 (KLGT…MLMN) and 287–420 (GRGE…AKWH). Aspartate 246, serine 249, and aspartate 252 together coordinate Ca(2+).

It belongs to the synaptotagmin family. Interacts with KIF1A; the interaction increases in presence of calcium and decreases when SYT4 is phosphorylated at Ser-135. Ca(2+) is required as a cofactor. Post-translationally, phosphorylation at Ser-135 by MAPK8/JNK1 reduces interaction with KIF1A and neuronal dense core vesicles mobility. In terms of tissue distribution, expressed in melanocytes. Expressed in brain. Within brain, expression is highest in hippocampus, with substantial levels also detected in amygdala and thalamus.

The protein localises to the cytoplasmic vesicle. It localises to the secretory vesicle. Its subcellular location is the neuronal dense core vesicle membrane. Synaptotagmin family member which does not bind Ca(2+). Involved in neuronal dense core vesicles (DCVs) mobility through its interaction with KIF1A. Upon increased neuronal activity, phosphorylation by MAPK8/JNK1 destabilizes the interaction with KIF1A and captures DCVs to synapses. Plays a role in dendrite formation by melanocytes. In Homo sapiens (Human), this protein is Synaptotagmin-4 (SYT4).